We begin with the raw amino-acid sequence, 349 residues long: tRNA N6-adenosine threonylcarbamoyltransferase (349 aa).

Fe cation is bound by residues histidine 113 and histidine 117. Residues 135-139, aspartate 169, glycine 182, aspartate 186, and asparagine 281 contribute to the substrate site; that span reads LVSGG. Aspartate 309 contacts Fe cation.

Belongs to the KAE1 / TsaD family. The cofactor is Fe(2+).

The protein resides in the cytoplasm. It carries out the reaction L-threonylcarbamoyladenylate + adenosine(37) in tRNA = N(6)-L-threonylcarbamoyladenosine(37) in tRNA + AMP + H(+). Required for the formation of a threonylcarbamoyl group on adenosine at position 37 (t(6)A37) in tRNAs that read codons beginning with adenine. Is involved in the transfer of the threonylcarbamoyl moiety of threonylcarbamoyl-AMP (TC-AMP) to the N6 group of A37, together with TsaE and TsaB. TsaD likely plays a direct catalytic role in this reaction. The chain is tRNA N6-adenosine threonylcarbamoyltransferase from Corynebacterium aurimucosum (strain ATCC 700975 / DSM 44827 / CIP 107346 / CN-1) (Corynebacterium nigricans).